Here is a 461-residue protein sequence, read N- to C-terminus: Alcaligin biosynthesis enzyme (461 aa).

9 to 15 (VAIGIGP) is an FAD binding site.

Belongs to the lysine N(6)-hydroxylase/L-ornithine N(5)-oxygenase family. The cofactor is FAD.

Its pathway is siderophore biosynthesis; alcaligin biosynthesis. The polypeptide is Alcaligin biosynthesis enzyme (alcA) (Bordetella bronchiseptica (strain ATCC BAA-588 / NCTC 13252 / RB50) (Alcaligenes bronchisepticus)).